Here is a 146-residue protein sequence, read N- to C-terminus: UPF0260 protein VF_1660 (146 aa).

This sequence belongs to the UPF0260 family.

The sequence is that of UPF0260 protein VF_1660 from Aliivibrio fischeri (strain ATCC 700601 / ES114) (Vibrio fischeri).